We begin with the raw amino-acid sequence, 712 residues long: DNA ligase (712 aa).

Positions 1–22 are enriched in low complexity; that stretch reads MSTQYDSDSSPAASNSGSADPA. A disordered region spans residues 1-23; it reads MSTQYDSDSSPAASNSGSADPAL. Residue 53 to 57 coordinates NAD(+); it reads DAEFD. The interval 69–93 is disordered; it reads SHPEAVTGPSPTTEVAPSPPESSPF. NAD(+)-binding positions include 104 to 105 and glutamate 129; that span reads SL. The active-site N6-AMP-lysine intermediate is lysine 131. Residues arginine 152, glutamate 192, lysine 308, and lysine 332 each contribute to the NAD(+) site. 4 residues coordinate Zn(2+): cysteine 426, cysteine 429, cysteine 445, and cysteine 451. The region spanning 624–712 is the BRCT domain; that stretch reads IQADLLAGLS…GPGKGDAEED (89 aa).

The protein belongs to the NAD-dependent DNA ligase family. LigA subfamily. Mg(2+) serves as cofactor. The cofactor is Mn(2+).

It catalyses the reaction NAD(+) + (deoxyribonucleotide)n-3'-hydroxyl + 5'-phospho-(deoxyribonucleotide)m = (deoxyribonucleotide)n+m + AMP + beta-nicotinamide D-nucleotide.. Functionally, DNA ligase that catalyzes the formation of phosphodiester linkages between 5'-phosphoryl and 3'-hydroxyl groups in double-stranded DNA using NAD as a coenzyme and as the energy source for the reaction. It is essential for DNA replication and repair of damaged DNA. The protein is DNA ligase of Corynebacterium urealyticum (strain ATCC 43042 / DSM 7109).